The chain runs to 355 residues: Glutamyl aminopeptidase (355 aa).

Residues His65 and Asp181 each contribute to the a divalent metal cation site. Residue Glu213 is the Proton acceptor of the active site. Residues Glu214, Asp236, and His319 each contribute to the a divalent metal cation site.

It belongs to the peptidase M42 family. A divalent metal cation is required as a cofactor.

It catalyses the reaction Release of N-terminal glutamate (and to a lesser extent aspartate) from a peptide.. This is Glutamyl aminopeptidase (pepA) from Lactococcus lactis subsp. cremoris (strain MG1363).